Here is a 265-residue protein sequence, read N- to C-terminus: Small ribosomal subunit protein eS4 (265 aa).

Residues 42-104 enclose the S4 RNA-binding domain; it reads LPLILIIRNR…TNENYRLLYD (63 aa).

It belongs to the eukaryotic ribosomal protein eS4 family.

The protein resides in the cytoplasm. This Zea mays (Maize) protein is Small ribosomal subunit protein eS4 (RPS4).